The chain runs to 432 residues: Proteinase-activated receptor 1 (432 aa).

An N-terminal signal peptide occupies residues Met1–Ser21. The propeptide at Ser22–Arg45 is removed for receptor activation. The Extracellular segment spans residues Ser46–Thr109. N-linked (GlcNAc...) asparagine glycans are attached at residues Asn69 and Asn82. Residues Leu110 to Val135 traverse the membrane as a helical segment. At Phe136–Ala144 the chain is on the cytoplasmic side. The helical transmembrane segment at Val145–Phe164 threads the bilayer. Residues Lys165–Arg183 are Extracellular-facing. Cys182 and Cys261 are joined by a disulfide. A helical transmembrane segment spans residues Phe184 to Ile205. At Asp206 to Arg225 the chain is on the cytoplasmic side. Residues Ala226–Leu246 traverse the membrane as a helical segment. Residues Lys247 to Ser275 lie on the Extracellular side of the membrane. N-linked (GlcNAc...) asparagine glycans are attached at residues Asn257 and Asn266. A helical membrane pass occupies residues Tyr276–Val295. Over Cys296 to Ala318 the chain is Cytoplasmic. A helical membrane pass occupies residues Leu319–Ile341. Residues Val342–Tyr357 lie on the Extracellular side of the membrane. Residues Phe358–Ala381 traverse the membrane as a helical segment. The Cytoplasmic portion of the chain corresponds to Ser382–Ala432. Position 425 is a phosphoserine (Ser425).

The protein belongs to the G-protein coupled receptor 1 family. Post-translationally, proteolytic cleavage by thrombin generates a new N-terminus that functions as a tethered ligand. Also proteolytically cleaved by cathepsin CTSG. In terms of processing, phosphorylated in the C-terminal tail; probably mediating desensitization prior to the uncoupling and internalization of the receptor. In terms of tissue distribution, expressed in primary cultured oligodendrocytes.

Its subcellular location is the cell membrane. Its function is as follows. High affinity receptor that binds the activated thrombin, leading to calcium release from intracellular stores. The thrombin-activated receptor signaling pathway is mediated through PTX-insensitive G proteins, activation of phospholipase C resulting in the production of 1D-myo-inositol 1,4,5-trisphosphate (InsP3) which binds to InsP3 receptors causing calcium release from the stores. In astrocytes, the calcium released into the cytosol allows the Ca(2+)-dependent release of L-glutamate into the synaptic cleft through BEST1, that targets the neuronal postsynaptic GRIN2A/NMDAR receptor resulting in the synaptic plasticity regulation. May play a role in platelets activation and in vascular development. Mediates up-regulation of pro-inflammatory cytokines, such as MCP-1/CCL2 and IL6, triggered by coagulation factor Xa (F10) in cardiac fibroblasts and umbilical vein endothelial cells. This Rattus norvegicus (Rat) protein is Proteinase-activated receptor 1.